An 805-amino-acid polypeptide reads, in one-letter code: Leucine--tRNA ligase (805 aa).

Residues 40–51 carry the 'HIGH' region motif; that stretch reads PYPSGSGLHVGH. Positions 576–580 match the 'KMSKS' region motif; it reads KMSKS. Residue Lys-579 participates in ATP binding.

Belongs to the class-I aminoacyl-tRNA synthetase family.

Its subcellular location is the cytoplasm. The catalysed reaction is tRNA(Leu) + L-leucine + ATP = L-leucyl-tRNA(Leu) + AMP + diphosphate. The sequence is that of Leucine--tRNA ligase from Chlorobium luteolum (strain DSM 273 / BCRC 81028 / 2530) (Pelodictyon luteolum).